A 404-amino-acid polypeptide reads, in one-letter code: 2,3-diketo-5-methylthiopentyl-1-phosphate enolase (404 aa).

Catalysis depends on K91, which acts as the Proton acceptor. Substrate contacts are provided by residues K140, 166-169 (KDDE), H257, G329, and 351-352 (GG). Residues K166, D168, and E169 each coordinate Mg(2+). K166 is modified (N6-carboxylysine).

Belongs to the RuBisCO large chain family. Type IV subfamily. As to quaternary structure, homodimer. It depends on Mg(2+) as a cofactor.

It carries out the reaction 5-methylsulfanyl-2,3-dioxopentyl phosphate = 2-hydroxy-5-methylsulfanyl-3-oxopent-1-enyl phosphate. It functions in the pathway amino-acid biosynthesis; L-methionine biosynthesis via salvage pathway; L-methionine from S-methyl-5-thio-alpha-D-ribose 1-phosphate: step 3/6. In terms of biological role, catalyzes the enolization of 2,3-diketo-5-methylthiopentyl-1-phosphate (DK-MTP-1-P) into 2-hydroxy-3-keto-5-methylthiopentenyl-1-phosphate (HK-MTPenyl-1-P). This Bacillus velezensis (strain DSM 23117 / BGSC 10A6 / LMG 26770 / FZB42) (Bacillus amyloliquefaciens subsp. plantarum) protein is 2,3-diketo-5-methylthiopentyl-1-phosphate enolase.